Reading from the N-terminus, the 271-residue chain is Short-chain dehydrogenase PC-15 (271 aa).

The NADP(+) site is built by Ile-8, Thr-34, Lys-40, Asp-56, Asn-84, Tyr-148, Lys-152, Val-181, and Thr-183. Tyr-148 (proton acceptor) is an active-site residue. The active-site Lowers pKa of active site Tyr is the Lys-152.

This sequence belongs to the short-chain dehydrogenases/reductases (SDR) family.

It participates in secondary metabolite biosynthesis. Its function is as follows. Short-chain dehydrogenase; part of the gene cluster that mediates the biosynthesis of the indole diterpenes penitrems. The geranylgeranyl diphosphate (GGPP) synthase penG catalyzes the first step in penitrem biosynthesis via conversion of farnesyl pyrophosphate and isopentyl pyrophosphate into geranylgeranyl pyrophosphate (GGPP). Condensation of indole-3-glycerol phosphate with GGPP by the prenyl transferase penC then forms 3-geranylgeranylindole (3-GGI). Epoxidation by the FAD-dependent monooxygenase penM leads to a epoxidized-GGI that is substrate of the terpene cyclase penB for cyclization to yield paspaline. Paspaline is subsequently converted to 13-desoxypaxilline by the cytochrome P450 monooxygenase penP, the latter being then converted to paxilline by the cytochrome P450 monooxygenase penQ. Paxilline is converted to beta-paxitriol via C-10 ketoreduction by the short-chain dehydrogenase PC-15 which can be monoprenylated at the C-20 by the indole diterpene prenyltransferase penD. A two-step elimination (acetylation and elimination) process performed by the O-acetyltransferase PC-16 and the P.simplicissimum ptmI-ortholog not yet identified in P.crustosum, leads to the production of the prenylated form of penijanthine. The FAD-linked oxidoreductase ptmO then converts the prenylated form of penijanthine into PC-M5 which is in turn transformed into PC-M4 by the aromatic dimethylallyltransferase PC-22. A series of oxidation steps involving 4 cytochrome P450 monooxygenases (PC-21, PC-05, PC-23, PC-20) and a FAD-dependent monooxygenase (PC-14) are required for the transformation of PC-M4 to penitrems A and E. Synthesis of these final products is proposed to proceed via penitrems D and C (PC-21, PC-05, PC-14) and penitrems B and F (PC-21, PC-05, PC-14, PC-23). In Penicillium crustosum (Blue mold fungus), this protein is Short-chain dehydrogenase PC-15.